Here is a 57-residue protein sequence, read N- to C-terminus: COP9 signalosome complex subunit 9 (57 aa).

Thr-26 carries the post-translational modification Phosphothreonine.

Belongs to the CSN9 family. As to quaternary structure, component of the CSN complex, composed of COPS1/GPS1, COPS2, COPS3, COPS4, COPS5, COPS6, COPS7 (COPS7A or COPS7B), COPS8 and COPS9. In the complex, it interacts directly with COPS3, COPS5 and COPS6.

It is found in the nucleus. Its subcellular location is the cytoplasm. The protein resides in the nucleoplasm. Functionally, component of the COP9 signalosome complex (CSN), a complex involved in various cellular and developmental processes. The CSN complex is an essential regulator of the ubiquitin (Ubl) conjugation pathway by mediating the deneddylation of the cullin subunits of SCF-type E3 ligase complexes, leading to decrease the Ubl ligase activity of SCF-type complexes such as SCF, CSA or DDB2. The complex is also involved in phosphorylation of p53/TP53, c-jun/JUN, IkappaBalpha/NFKBIA, ITPK1 and IRF8/ICSBP, possibly via its association with CK2 and PKD kinases. CSN-dependent phosphorylation of TP53 and JUN promotes and protects degradation by the Ubl system, respectively. Plays a role in cell proliferation. The protein is COP9 signalosome complex subunit 9 of Bos taurus (Bovine).